Here is a 472-residue protein sequence, read N- to C-terminus: MSTGTLYDKVWNRHAVRELPTGETQLFVGLHLIHEVTSPQAFGMLEERDLSVAFPARTFATTDHIIPTADLERPFGDDQAETMLQVLERNTEAYDITFFDPSSGAQGIVHVVGPEQGLTQPGMTIVCGDSHTSTHGAFGTLGFGIGTSQIRDVLATQCIAMEKQDVRRIQVDGALGEGVYAKDIILKIIGELGVEGGIGYVYEYGGPAIKGLSMEGRMSICNMSVEGGARAGYVNPDLTTFEYMKGRPHAPSGAAWERAVDCWQQIQSDPDATYDDTVTFDGSAIEPMVTWGITPGQALGISEPIPDPARMDSGDRATAEKALDHMDLRPGRTMEGVNVDVAFLGSCTNARITDLREAASLLERLGRPVADDVRAMVVPGSQGVKQQAEDEGLADTFREAGFDWRGAGCSMCLGMNQDQLEGRELCASSSNRNFIGRQGSKDGRTVLMSPAMVVAAAVEGEVTDVRRLMRET.

C347, C409, and C412 together coordinate [4Fe-4S] cluster.

The protein belongs to the aconitase/IPM isomerase family. LeuC type 1 subfamily. As to quaternary structure, heterodimer of LeuC and LeuD. [4Fe-4S] cluster serves as cofactor.

It catalyses the reaction (2R,3S)-3-isopropylmalate = (2S)-2-isopropylmalate. Its pathway is amino-acid biosynthesis; L-leucine biosynthesis; L-leucine from 3-methyl-2-oxobutanoate: step 2/4. In terms of biological role, catalyzes the isomerization between 2-isopropylmalate and 3-isopropylmalate, via the formation of 2-isopropylmaleate. The chain is 3-isopropylmalate dehydratase large subunit from Salinibacter ruber (strain DSM 13855 / M31).